Reading from the N-terminus, the 124-residue chain is 5-hydroxyisourate hydrolase (124 aa).

3 residues coordinate substrate: His15, Arg53, and Tyr121.

It belongs to the transthyretin family. 5-hydroxyisourate hydrolase subfamily. In terms of assembly, homotetramer.

It catalyses the reaction 5-hydroxyisourate + H2O = 5-hydroxy-2-oxo-4-ureido-2,5-dihydro-1H-imidazole-5-carboxylate + H(+). Catalyzes the hydrolysis of 5-hydroxyisourate (HIU) to 2-oxo-4-hydroxy-4-carboxy-5-ureidoimidazoline (OHCU). The protein is 5-hydroxyisourate hydrolase of Mesorhizobium japonicum (strain LMG 29417 / CECT 9101 / MAFF 303099) (Mesorhizobium loti (strain MAFF 303099)).